The chain runs to 881 residues: Protein translocase subunit SecA (881 aa).

ATP contacts are provided by residues Gln83, 101-105 (GEGKT), and Asp492.

The protein belongs to the SecA family.

Its subcellular location is the plastid. The protein localises to the chloroplast stroma. It localises to the chloroplast thylakoid membrane. It carries out the reaction ATP + H2O + cellular proteinSide 1 = ADP + phosphate + cellular proteinSide 2.. Functionally, has a central role in coupling the hydrolysis of ATP to the transfer of proteins across the thylakoid membrane. The sequence is that of Protein translocase subunit SecA from Emiliania huxleyi (Coccolithophore).